Consider the following 176-residue polypeptide: MKIIAKKDLFINDEIRVREVRLVGLEGEQLGIKPLSEAQSLADASNVDLVLIQPQAVPPVAKLMDYGKFKFEYQKKQKEQRKKQSVVTVKEVRLSPVIDKGDFETKLRNGRKFLEKGNKVKVSIRFKGRMITHKEIGAKVLADFAEATQDIAIIEQRAKMDGRQMFMQLAPISDKK.

This sequence belongs to the IF-3 family. Monomer.

The protein resides in the cytoplasm. Functionally, IF-3 binds to the 30S ribosomal subunit and shifts the equilibrium between 70S ribosomes and their 50S and 30S subunits in favor of the free subunits, thus enhancing the availability of 30S subunits on which protein synthesis initiation begins. The chain is Translation initiation factor IF-3 from Streptococcus pyogenes serotype M18 (strain MGAS8232).